We begin with the raw amino-acid sequence, 297 residues long: Large ribosomal subunit protein uL18 (297 aa).

Lys-164 is covalently cross-linked (Glycyl lysine isopeptide (Lys-Gly) (interchain with G-Cter in ubiquitin)). 3 positions are modified to phosphoserine: Ser-167, Ser-176, and Ser-235.

Belongs to the universal ribosomal protein uL18 family. As to quaternary structure, component of the large ribosomal subunit (LSU). Mature yeast ribosomes consist of a small (40S) and a large (60S) subunit. The 40S small subunit contains 1 molecule of ribosomal RNA (18S rRNA) and 33 different proteins (encoded by 57 genes). The large 60S subunit contains 3 rRNA molecules (25S, 5.8S and 5S rRNA) and 46 different proteins (encoded by 81 genes). Component of a hexameric 5S RNP precursor complex, composed of 5S RNA, RRS1, RPF2, RPL5, RPL11A/RPL11B and SYO1; this complex acts as a precursor for ribosome assembly. RPL5/uL18 forms a heterotrimeric complex with SYO1 and RPL11A/RPL11B/uL5. Interaction of this complex with KAP104 allows the nuclear import of the heterotrimer.

It localises to the cytoplasm. The protein localises to the nucleus. Functionally, component of the ribosome, a large ribonucleoprotein complex responsible for the synthesis of proteins in the cell. The small ribosomal subunit (SSU) binds messenger RNAs (mRNAs) and translates the encoded message by selecting cognate aminoacyl-transfer RNA (tRNA) molecules. The large subunit (LSU) contains the ribosomal catalytic site termed the peptidyl transferase center (PTC), which catalyzes the formation of peptide bonds, thereby polymerizing the amino acids delivered by tRNAs into a polypeptide chain. The nascent polypeptides leave the ribosome through a tunnel in the LSU and interact with protein factors that function in enzymatic processing, targeting, and the membrane insertion of nascent chains at the exit of the ribosomal tunnel. The polypeptide is Large ribosomal subunit protein uL18 (Saccharomyces cerevisiae (strain ATCC 204508 / S288c) (Baker's yeast)).